A 92-amino-acid chain; its full sequence is MEENQITIVDEKGNEHLCEIIFTFDAEKFGKKSYVVFSPIGEVDEDGDQIYDAMAYEQNEEEGGTLLPIESEEEWEMVQEMFNTLADEQEAE.

The protein belongs to the UPF0473 family.

This chain is UPF0473 protein BCE33L4129, found in Bacillus cereus (strain ZK / E33L).